Consider the following 369-residue polypeptide: Forkhead box protein I2-A (369 aa).

A DNA-binding region (fork-head) is located at residues 124 to 218 (RPPYSYSSLI…DNGNFRRKRK (95 aa)). The interval 215 to 252 (RKRKRKSESVGAGFDEDSNEDKKPLALKSLGSDSPQGA) is disordered.

Localized to the animal hemisphere of early cleavage stage embryos. Zygotic expression is restricted to the dorsal part of the epibranchial placodes of the head within a region located near the tip of the first, second and third visceral pouch.

The protein localises to the nucleus. Its function is as follows. Possible transcriptional activator. The sequence is that of Forkhead box protein I2-A (foxi2-a) from Xenopus laevis (African clawed frog).